The following is a 721-amino-acid chain: Choline O-acetyltransferase (721 aa).

Residue histidine 419 is the Proton acceptor of the active site. CoA is bound by residues 496 to 508, serine 534, and glutamine 656; that span reads GKTF…VSPD.

This sequence belongs to the carnitine/choline acetyltransferase family. As to quaternary structure, the 54 kDa and 13 kDa chains exist as a heterodimer. The N-terminus of choline O-acetyltransferase 67 kDa and 54 kDa chains are blocked.

It catalyses the reaction choline + acetyl-CoA = acetylcholine + CoA. Functionally, catalyzes the reversible synthesis of acetylcholine (ACh) from acetyl CoA and choline at cholinergic synapses. This chain is Choline O-acetyltransferase, found in Drosophila melanogaster (Fruit fly).